A 246-amino-acid polypeptide reads, in one-letter code: Auxin-responsive protein IAA11 (246 aa).

The EAR-like (transcriptional repression) signature appears at 36–40; the sequence is LGLTL. A PB1 domain is found at 136–235; the sequence is SMFVKVTMDG…SVRRLRIMKT (100 aa).

Belongs to the Aux/IAA family. As to quaternary structure, homodimers and heterodimers. Interacts with TPL. Preferentially expressed in stems and flowers.

Its subcellular location is the nucleus. In terms of biological role, aux/IAA proteins are short-lived transcriptional factors that function as repressors of early auxin response genes at low auxin concentrations. Repression is thought to result from the interaction with auxin response factors (ARFs), proteins that bind to the auxin-responsive promoter element (AuxRE). Formation of heterodimers with ARF proteins may alter their ability to modulate early auxin response genes expression. The protein is Auxin-responsive protein IAA11 (IAA11) of Arabidopsis thaliana (Mouse-ear cress).